The following is a 147-amino-acid chain: Hemoglobin anodic subunit beta (147 aa).

The region spanning Glu2–His147 is the Globin domain. Heme b is bound by residues His63 and His92.

It belongs to the globin family. Heterotetramer of two alpha chains and two beta chains. Red blood cells.

Functionally, involved in oxygen transport from gills to the various peripheral tissues. The sequence is that of Hemoglobin anodic subunit beta from Gymnothorax unicolor (Brown moray).